Reading from the N-terminus, the 242-residue chain is 4-hydroxy-tetrahydrodipicolinate reductase (242 aa).

Residues 8 to 13 (GAKGRM), 75 to 77 (GTT), and 99 to 102 (ATNM) contribute to the NAD(+) site. The active-site Proton donor/acceptor is His131. His132 provides a ligand contact to (S)-2,3,4,5-tetrahydrodipicolinate. Residue Lys135 is the Proton donor of the active site. A (S)-2,3,4,5-tetrahydrodipicolinate-binding site is contributed by 141–142 (GT).

Belongs to the DapB family.

It localises to the cytoplasm. The catalysed reaction is (S)-2,3,4,5-tetrahydrodipicolinate + NAD(+) + H2O = (2S,4S)-4-hydroxy-2,3,4,5-tetrahydrodipicolinate + NADH + H(+). It catalyses the reaction (S)-2,3,4,5-tetrahydrodipicolinate + NADP(+) + H2O = (2S,4S)-4-hydroxy-2,3,4,5-tetrahydrodipicolinate + NADPH + H(+). The protein operates within amino-acid biosynthesis; L-lysine biosynthesis via DAP pathway; (S)-tetrahydrodipicolinate from L-aspartate: step 4/4. In terms of biological role, catalyzes the conversion of 4-hydroxy-tetrahydrodipicolinate (HTPA) to tetrahydrodipicolinate. This is 4-hydroxy-tetrahydrodipicolinate reductase from Campylobacter jejuni subsp. jejuni serotype O:2 (strain ATCC 700819 / NCTC 11168).